Reading from the N-terminus, the 197-residue chain is Probable GTP-binding protein EngB (197 aa).

The 174-residue stretch at 22-195 folds into the EngB-type G domain; sequence ELPEVALAGR…WKAIYALITE (174 aa). Residues 30–37, 57–61, 75–78, 142–145, and 174–176 each bind GTP; these read GRSNVGKS, GKTQT, DVPG, TKLD, and FSA. Residues Ser-37 and Thr-59 each contribute to the Mg(2+) site.

This sequence belongs to the TRAFAC class TrmE-Era-EngA-EngB-Septin-like GTPase superfamily. EngB GTPase family. It depends on Mg(2+) as a cofactor.

In terms of biological role, necessary for normal cell division and for the maintenance of normal septation. The chain is Probable GTP-binding protein EngB from Exiguobacterium sp. (strain ATCC BAA-1283 / AT1b).